We begin with the raw amino-acid sequence, 338 residues long: Aspartate carbamoyltransferase catalytic subunit (338 aa).

Carbamoyl phosphate contacts are provided by arginine 72 and threonine 73. L-aspartate is bound at residue lysine 100. Residues arginine 122, histidine 152, and glutamine 155 each contribute to the carbamoyl phosphate site. Residues arginine 186 and arginine 243 each contribute to the L-aspartate site. Residues glycine 284 and proline 285 each contribute to the carbamoyl phosphate site.

This sequence belongs to the aspartate/ornithine carbamoyltransferase superfamily. ATCase family. Heterododecamer (2C3:3R2) of six catalytic PyrB chains organized as two trimers (C3), and six regulatory PyrI chains organized as three dimers (R2).

It carries out the reaction carbamoyl phosphate + L-aspartate = N-carbamoyl-L-aspartate + phosphate + H(+). It functions in the pathway pyrimidine metabolism; UMP biosynthesis via de novo pathway; (S)-dihydroorotate from bicarbonate: step 2/3. Functionally, catalyzes the condensation of carbamoyl phosphate and aspartate to form carbamoyl aspartate and inorganic phosphate, the committed step in the de novo pyrimidine nucleotide biosynthesis pathway. This is Aspartate carbamoyltransferase catalytic subunit from Acinetobacter baylyi (strain ATCC 33305 / BD413 / ADP1).